Reading from the N-terminus, the 973-residue chain is E3 ubiquitin-protein ligase MIB2 (973 aa).

The MIB/HERC2 1 domain occupies 1–80 (MDLDPHAGVQ…AHDLLLYDNA (80 aa)). The ZZ-type zinc-finger motif lies at 86-138 (HPNIICDCCKKHGLRGMRWKCRVCFDYDLCTQCYMHNKHDLTHAFERYETSHS). Cysteine 91, cysteine 94, cysteine 106, cysteine 109, cysteine 115, cysteine 118, histidine 124, and histidine 128 together coordinate Zn(2+). An MIB/HERC2 2 domain is found at 149–227 (LPRIPLRGIF…KVDLRCVGEA (79 aa)). Serine 251 carries the phosphoserine modification. ANK repeat units lie at residues 480-509 (QGRT…SMDL), 513-542 (EGNT…AVDA), 546-575 (TRST…DVNL), 579-611 (HADT…DVTA), 615-644 (QGFT…QLVD), 649-679 (DGFT…DVNV), 683-712 (KLQS…SVNT), 716-744 (EGDT…DPGP), and 785-814 (RGRS…ERQA). 2 consecutive RING-type zinc fingers follow at residues 850–885 (CLVC…IRCQ) and 929–962 (CPIC…PICR).

In terms of assembly, interacts with actin monomer. Post-translationally, ubiquitinated. Possibly via autoubiquitination. Highly expressed in brain, heart, liver and kidney.

Its subcellular location is the cytoplasm. The protein localises to the endosome. It carries out the reaction S-ubiquitinyl-[E2 ubiquitin-conjugating enzyme]-L-cysteine + [acceptor protein]-L-lysine = [E2 ubiquitin-conjugating enzyme]-L-cysteine + N(6)-ubiquitinyl-[acceptor protein]-L-lysine.. The protein operates within protein modification; protein ubiquitination. Its function is as follows. E3 ubiquitin-protein ligase that mediates ubiquitination of Delta receptors, which act as ligands of Notch proteins. Positively regulates the Delta-mediated Notch signaling by ubiquitinating the intracellular domain of Delta, leading to endocytosis of Delta receptors. The chain is E3 ubiquitin-protein ligase MIB2 (Mib2) from Mus musculus (Mouse).